The primary structure comprises 198 residues: Segregation and condensation protein B (198 aa).

The segment at K168 to E198 is disordered.

Belongs to the ScpB family. In terms of assembly, homodimer. Homodimerization may be required to stabilize the binding of ScpA to the Smc head domains. Component of a cohesin-like complex composed of ScpA, ScpB and the Smc homodimer, in which ScpA and ScpB bind to the head domain of Smc. The presence of the three proteins is required for the association of the complex with DNA.

The protein resides in the cytoplasm. Participates in chromosomal partition during cell division. May act via the formation of a condensin-like complex containing Smc and ScpA that pull DNA away from mid-cell into both cell halves. In Listeria monocytogenes serotype 4b (strain CLIP80459), this protein is Segregation and condensation protein B.